Consider the following 257-residue polypeptide: MSVPLILTLLAGAATFIGAFLGVLGQKPSNRVLAFSLGFAAGIMLLISLMEMLPAALDTEGMSPVLGYGMFIIGLLGYFGLDRLLPHAHPQDLVPKRQQPIPGSIKRTAVLLTLGISLHNFPEGIATFVTASSNLELGFGIALAVALHNIPEGLAVAGPVYAATGSKRTAIFWAGISGMAEIFGGVLAWLILGSLVSPIVMAAIMAAVAGIMVALSVDELMPLAKEIDPNNNPSYGVLCGMSVMGLSLVILQTIGIG.

A run of 3 helical transmembrane segments spans residues 5-25 (LILTLLAGAATFIGAFLGVLG), 32-52 (VLAFSLGFAAGIMLLISLMEM), and 61-81 (GMSPVLGYGMFIIGLLGYFGL). Residues Asn-120 and Glu-123 each coordinate Fe(2+). Residues Glu-123 and His-148 each contribute to the Zn(2+) site. Fe(2+) contacts are provided by Asn-149, Glu-152, and Glu-181. Position 152 (Glu-152) interacts with Zn(2+). The next 3 helical transmembrane spans lie at 182 to 202 (IFGGVLAWLILGSLVSPIVMA), 203 to 223 (AIMAAVAGIMVALSVDELMPL), and 236 to 256 (GVLCGMSVMGLSLVILQTIGI).

This sequence belongs to the ZIP transporter (TC 2.A.5) family. ZupT subfamily.

The protein resides in the cell inner membrane. It carries out the reaction Zn(2+)(in) = Zn(2+)(out). In terms of biological role, mediates zinc uptake. May also transport other divalent cations. The protein is Zinc transporter ZupT of Salmonella arizonae (strain ATCC BAA-731 / CDC346-86 / RSK2980).